The primary structure comprises 304 residues: Ornithine carbamoyltransferase (304 aa).

Carbamoyl phosphate is bound by residues 47–50 (STRT), R98, and 125–128 (HPCQ). Residues N156, D221, and 225-226 (SM) contribute to the L-ornithine site. Residues 262–263 (CL) and R290 each bind carbamoyl phosphate.

Belongs to the aspartate/ornithine carbamoyltransferase superfamily. OTCase family.

It is found in the cytoplasm. The enzyme catalyses carbamoyl phosphate + L-ornithine = L-citrulline + phosphate + H(+). It functions in the pathway amino-acid biosynthesis; L-arginine biosynthesis; L-arginine from L-ornithine and carbamoyl phosphate: step 1/3. Reversibly catalyzes the transfer of the carbamoyl group from carbamoyl phosphate (CP) to the N(epsilon) atom of ornithine (ORN) to produce L-citrulline. The sequence is that of Ornithine carbamoyltransferase from Methanococcus maripaludis (strain C5 / ATCC BAA-1333).